A 252-amino-acid chain; its full sequence is tRNA-cytidine(32) 2-sulfurtransferase (252 aa).

The PP-loop motif motif lies at 37-42; the sequence is SGGKDS. [4Fe-4S] cluster is bound by residues C112, C115, and C202.

Belongs to the TtcA family. Homodimer. Mg(2+) is required as a cofactor. It depends on [4Fe-4S] cluster as a cofactor.

The protein localises to the cytoplasm. It carries out the reaction cytidine(32) in tRNA + S-sulfanyl-L-cysteinyl-[cysteine desulfurase] + AH2 + ATP = 2-thiocytidine(32) in tRNA + L-cysteinyl-[cysteine desulfurase] + A + AMP + diphosphate + H(+). The protein operates within tRNA modification. Its function is as follows. Catalyzes the ATP-dependent 2-thiolation of cytidine in position 32 of tRNA, to form 2-thiocytidine (s(2)C32). The sulfur atoms are provided by the cysteine/cysteine desulfurase (IscS) system. This chain is tRNA-cytidine(32) 2-sulfurtransferase, found in Geotalea uraniireducens (strain Rf4) (Geobacter uraniireducens).